The following is an 818-amino-acid chain: Phosphoenolpyruvate synthase (818 aa).

The active-site Tele-phosphohistidine intermediate is histidine 442. Residues arginine 532, arginine 601, glutamate 703, glycine 724, serine 725, asparagine 726, and aspartate 727 each contribute to the substrate site. Residue glutamate 703 participates in Mg(2+) binding. Residue aspartate 727 coordinates Mg(2+). Cysteine 774 acts as the Proton donor in catalysis.

Belongs to the PEP-utilizing enzyme family. The cofactor is Mg(2+).

The enzyme catalyses pyruvate + ATP + H2O = phosphoenolpyruvate + AMP + phosphate + 2 H(+). It functions in the pathway carbohydrate biosynthesis; gluconeogenesis. In terms of biological role, catalyzes the phosphorylation of pyruvate to phosphoenolpyruvate. In Synechocystis sp. (strain ATCC 27184 / PCC 6803 / Kazusa), this protein is Phosphoenolpyruvate synthase (ppsA).